The chain runs to 287 residues: Nuclease S1 (287 aa).

Positions 1 to 20 are cleaved as a signal peptide; sequence MPRLLPISAATLALAQLTYG. Positions 21, 26, 65, and 80 each coordinate a divalent metal cation. Substrate is bound by residues 21-26, 65-71, 80-83, and 93-98; these read WGNLGH, DTYKYTD, HFID, and GVDYDR. Intrachain disulfides connect C92/C236 and C100/C105. Residues N112 and N122 are each glycosylated (N-linked (GlcNAc...) asparagine). H135, D139, H145, H168, and D172 together coordinate a divalent metal cation. The segment at 135–183 is substrate binding; sequence HIIGDIHQPLHDENLEAGGNGIDVTYDGETTNLHHIWDTNMPEEAAGGY. A glycan (N-linked (GlcNAc...) asparagine) is linked at N248.

This sequence belongs to the nuclease type I family. In terms of assembly, monomer. Zn(2+) serves as cofactor.

The catalysed reaction is Endonucleolytic cleavage to 5'-phosphomononucleotide and 5'-phosphooligonucleotide end-products.. Inhibited by inorganic phosphate (Pi). Functionally, hydrolyzes only single-stranded DNA and RNA without apparent specificity for bases. The chain is Nuclease S1 from Aspergillus oryzae (strain ATCC 42149 / RIB 40) (Yellow koji mold).